A 370-amino-acid polypeptide reads, in one-letter code: Phospho-N-acetylmuramoyl-pentapeptide-transferase (370 aa).

10 helical membrane passes run 29–49, 70–90, 93–113, 133–153, 177–197, 209–229, 251–271, 273–293, 298–318, and 349–369; these read AGLTSMFITFIFGKSLISFLL, GTPTMGGLIMILSLTISTLLW, LSNWNVILLLISAILFAGLGF, KFIVTILFAVTITTLYFYYTG, GPVWNLGIFAVPFAIIVLIGS, GLASGTVVISTATFALIAYVS, VFLAGLSGALLGFLWFNCHPA, VFMGDTGSLFLGSTLGLVAIM, ILLVILGGIFVAEAVSVILQV, and VIRFWIIGIILAIITLSTLKI.

The protein belongs to the glycosyltransferase 4 family. MraY subfamily. Requires Mg(2+) as cofactor.

Its subcellular location is the cell inner membrane. The catalysed reaction is UDP-N-acetyl-alpha-D-muramoyl-L-alanyl-gamma-D-glutamyl-meso-2,6-diaminopimeloyl-D-alanyl-D-alanine + di-trans,octa-cis-undecaprenyl phosphate = di-trans,octa-cis-undecaprenyl diphospho-N-acetyl-alpha-D-muramoyl-L-alanyl-D-glutamyl-meso-2,6-diaminopimeloyl-D-alanyl-D-alanine + UMP. It functions in the pathway cell wall biogenesis; peptidoglycan biosynthesis. In terms of biological role, catalyzes the initial step of the lipid cycle reactions in the biosynthesis of the cell wall peptidoglycan: transfers peptidoglycan precursor phospho-MurNAc-pentapeptide from UDP-MurNAc-pentapeptide onto the lipid carrier undecaprenyl phosphate, yielding undecaprenyl-pyrophosphoryl-MurNAc-pentapeptide, known as lipid I. This Leptospira biflexa serovar Patoc (strain Patoc 1 / Ames) protein is Phospho-N-acetylmuramoyl-pentapeptide-transferase.